The primary structure comprises 609 residues: Chaperone protein DnaK (609 aa).

Position 172 is a phosphothreonine; by autocatalysis (Thr172). The tract at residues 578–609 is disordered; that stretch reads QAQAQQQAGAGGAAKKDENVVDAEFEEVKDDK. Residues 597–609 are compositionally biased toward acidic residues; it reads VVDAEFEEVKDDK.

It belongs to the heat shock protein 70 family.

Its function is as follows. Acts as a chaperone. This Geobacillus sp. (strain WCH70) protein is Chaperone protein DnaK.